We begin with the raw amino-acid sequence, 354 residues long: Nicotinate-nucleotide--dimethylbenzimidazole phosphoribosyltransferase (354 aa).

Residue glutamate 319 is the Proton acceptor of the active site.

Belongs to the CobT family.

The enzyme catalyses 5,6-dimethylbenzimidazole + nicotinate beta-D-ribonucleotide = alpha-ribazole 5'-phosphate + nicotinate + H(+). The protein operates within nucleoside biosynthesis; alpha-ribazole biosynthesis; alpha-ribazole from 5,6-dimethylbenzimidazole: step 1/2. Functionally, catalyzes the synthesis of alpha-ribazole-5'-phosphate from nicotinate mononucleotide (NAMN) and 5,6-dimethylbenzimidazole (DMB). The polypeptide is Nicotinate-nucleotide--dimethylbenzimidazole phosphoribosyltransferase (Chlorobium chlorochromatii (strain CaD3)).